The following is a 428-amino-acid chain: 3-phosphoshikimate 1-carboxyvinyltransferase (428 aa).

Lys21, Ser22, and Arg26 together coordinate 3-phosphoshikimate. Lys21 lines the phosphoenolpyruvate pocket. Residues Gly91 and Arg119 each coordinate phosphoenolpyruvate. 3-phosphoshikimate-binding residues include Ser164, Gln166, Asp313, and Lys340. Phosphoenolpyruvate is bound at residue Gln166. Asp313 serves as the catalytic Proton acceptor. Positions 344 and 386 each coordinate phosphoenolpyruvate.

The protein belongs to the EPSP synthase family. Monomer.

It is found in the cytoplasm. The enzyme catalyses 3-phosphoshikimate + phosphoenolpyruvate = 5-O-(1-carboxyvinyl)-3-phosphoshikimate + phosphate. Its pathway is metabolic intermediate biosynthesis; chorismate biosynthesis; chorismate from D-erythrose 4-phosphate and phosphoenolpyruvate: step 6/7. Functionally, catalyzes the transfer of the enolpyruvyl moiety of phosphoenolpyruvate (PEP) to the 5-hydroxyl of shikimate-3-phosphate (S3P) to produce enolpyruvyl shikimate-3-phosphate and inorganic phosphate. This chain is 3-phosphoshikimate 1-carboxyvinyltransferase, found in Campylobacter jejuni subsp. jejuni serotype O:23/36 (strain 81-176).